Reading from the N-terminus, the 192-residue chain is Xanthine phosphoribosyltransferase (192 aa).

Residues Leu20 and Asn27 each contribute to the xanthine site. 128–132 provides a ligand contact to 5-phospho-alpha-D-ribose 1-diphosphate; that stretch reads AQGEA. Lys156 lines the xanthine pocket.

This sequence belongs to the purine/pyrimidine phosphoribosyltransferase family. Xpt subfamily. In terms of assembly, homodimer.

The protein localises to the cytoplasm. It catalyses the reaction XMP + diphosphate = xanthine + 5-phospho-alpha-D-ribose 1-diphosphate. It participates in purine metabolism; XMP biosynthesis via salvage pathway; XMP from xanthine: step 1/1. Its function is as follows. Converts the preformed base xanthine, a product of nucleic acid breakdown, to xanthosine 5'-monophosphate (XMP), so it can be reused for RNA or DNA synthesis. This Lactobacillus helveticus (strain DPC 4571) protein is Xanthine phosphoribosyltransferase.